Here is a 247-residue protein sequence, read N- to C-terminus: Killer cell lectin-like receptor subfamily I member 2 (247 aa).

Positions 1 to 12 are enriched in basic and acidic residues; it reads MPRKKQNERGTN. The interval 1–39 is disordered; the sequence is MPRKKQNERGTNKQEIINIETKSSTFQEKQRQSKTDQIS. Residues 1–79 lie on the Cytoplasmic side of the membrane; that stretch reads MPRKKQNERG…GTDPWLTTWR (79 aa). Residues 80-100 form a helical membrane-spanning segment; that stretch reads IITVILGTSCIILVTKVGFLI. The Extracellular segment spans residues 101–247; it reads PNLFSRGEKR…KAYTCEFNLQ (147 aa). N-linked (GlcNAc...) asparagine glycosylation is found at asparagine 125, asparagine 196, asparagine 212, and asparagine 218. The 105-residue stretch at 139–243 folds into the C-type lectin domain; that stretch reads FGNNFYLFFR…CSSKKAYTCE (105 aa). Disulfide bonds link cysteine 160/cysteine 242 and cysteine 221/cysteine 234.

Heterodimer with KLRE1. As to expression, expressed in natural killer (NK) cells.

Its subcellular location is the cell membrane. Functionally, lectin-like receptor for natural killer (NK) cells. Heterodimer formation with KLRE1 mediates NK cell cytolytic activity. The protein is Killer cell lectin-like receptor subfamily I member 2 of Rattus norvegicus (Rat).